The sequence spans 434 residues: ATP-dependent protease ATPase subunit HslU (434 aa).

ATP contacts are provided by residues Ile-18, Gly-60–Glu-65, Asp-247, Glu-312, and Arg-384.

This sequence belongs to the ClpX chaperone family. HslU subfamily. As to quaternary structure, a double ring-shaped homohexamer of HslV is capped on each side by a ring-shaped HslU homohexamer. The assembly of the HslU/HslV complex is dependent on binding of ATP.

The protein resides in the cytoplasm. ATPase subunit of a proteasome-like degradation complex; this subunit has chaperone activity. The binding of ATP and its subsequent hydrolysis by HslU are essential for unfolding of protein substrates subsequently hydrolyzed by HslV. HslU recognizes the N-terminal part of its protein substrates and unfolds these before they are guided to HslV for hydrolysis. The sequence is that of ATP-dependent protease ATPase subunit HslU from Brucella anthropi (strain ATCC 49188 / DSM 6882 / CCUG 24695 / JCM 21032 / LMG 3331 / NBRC 15819 / NCTC 12168 / Alc 37) (Ochrobactrum anthropi).